The following is a 529-amino-acid chain: Peptide chain release factor 3 (529 aa).

Residues 11–280 (KKRRTFAIIS…GLVEWAPAPL (270 aa)) enclose the tr-type G domain. GTP is bound by residues 20–27 (SHPDAGKT), 88–92 (DTPGH), and 142–145 (NKLD).

It belongs to the TRAFAC class translation factor GTPase superfamily. Classic translation factor GTPase family. PrfC subfamily.

The protein resides in the cytoplasm. In terms of biological role, increases the formation of ribosomal termination complexes and stimulates activities of RF-1 and RF-2. It binds guanine nucleotides and has strong preference for UGA stop codons. It may interact directly with the ribosome. The stimulation of RF-1 and RF-2 is significantly reduced by GTP and GDP, but not by GMP. In Alteromonas mediterranea (strain DSM 17117 / CIP 110805 / LMG 28347 / Deep ecotype), this protein is Peptide chain release factor 3.